The following is a 540-amino-acid chain: Glucose-6-phosphate isomerase (540 aa).

Glu346 (proton donor) is an active-site residue. Active-site residues include His377 and Lys505.

The protein belongs to the GPI family.

The protein resides in the cytoplasm. The catalysed reaction is alpha-D-glucose 6-phosphate = beta-D-fructose 6-phosphate. It participates in carbohydrate biosynthesis; gluconeogenesis. Its pathway is carbohydrate degradation; glycolysis; D-glyceraldehyde 3-phosphate and glycerone phosphate from D-glucose: step 2/4. Functionally, catalyzes the reversible isomerization of glucose-6-phosphate to fructose-6-phosphate. The sequence is that of Glucose-6-phosphate isomerase from Francisella tularensis subsp. holarctica (strain FTNF002-00 / FTA).